The sequence spans 628 residues: Leucine-rich repeat and fibronectin type-III domain-containing protein 3 (628 aa).

The N-terminal stretch at 1 to 16 (MAILPLLLCLLPLAPA) is a signal peptide. Over 17–539 (SSPPQSATPS…PHAPFLGGTM (523 aa)) the chain is Extracellular. Positions 19–59 (PPQSATPSPCPRRCRCQTQSLPLSVLCPGAGLLFVPPSLDR) constitute an LRRNT domain. 7 LRR repeats span residues 60 to 83 (RAAE…ANMT), 84 to 105 (GLLH…AFAD), 108 to 129 (ALRA…QLRG), 132 to 153 (NLRH…ALDD), 157 to 178 (TLED…ALGR), 181 to 202 (NVNT…AFSR), and 205 to 226 (KLAR…PLFS). A glycan (N-linked (GlcNAc...) asparagine) is linked at Asn-81. The LRRCT domain maps to 249–295 (NPLHCNCELVWLRRLAREDDLEACASPPALGGRYFWAVGEEEFVCEP). Residues 295-382 (PPVVTHRSPP…GEATAAVELT (88 aa)) form the Ig-like domain. Cys-317 and Cys-366 form a disulfide bridge. 3 N-linked (GlcNAc...) asparagine glycosylation sites follow: Asn-339, Asn-348, and Asn-393. Residues 382 to 430 (TVGPPPPPQLANSTSCDPPRDGDPDALTPPSAASASAKVADTGPPTDRG) form a disordered region. A compositionally biased stretch (low complexity) spans 406–422 (DALTPPSAASASAKVAD). The Fibronectin type-III domain maps to 425 to 523 (PPTDRGVQVT…GCARFSTEPA (99 aa)). N-linked (GlcNAc...) asparagine glycosylation occurs at Asn-462. The chain crosses the membrane as a helical span at residues 540–560 (IIALGGVIVASVLVFIFVLLM). Over 561–628 (RYKVHGGQPP…WGPGHEPVGP (68 aa)) the chain is Cytoplasmic.

The protein belongs to the LRFN family. As to quaternary structure, can form heteromeric complexes with LRFN1, LRFN2, LRFN4 and LRFN5. Able to form homomeric complexes across cell junctions, between adjacent cells. Does not interact with DLG4. N-glycosylated.

The protein localises to the cell membrane. It is found in the cell projection. Its subcellular location is the axon. It localises to the dendrite. The protein resides in the synapse. The protein localises to the presynaptic cell membrane. It is found in the postsynaptic cell membrane. Cell adhesion molecule that mediates homophilic cell-cell adhesion in a Ca(2+)-independent manner. Promotes neurite outgrowth in hippocampal neurons. The protein is Leucine-rich repeat and fibronectin type-III domain-containing protein 3 (LRFN3) of Homo sapiens (Human).